Reading from the N-terminus, the 258-residue chain is MLVAERQQKIVEIVNMRSSIRVSELSDIFSVTEETIRRDLEKLEKEHKLSRSHGGAVSIQQKESEIHFSEREITNVIEKKAIAHEAAKYVKSGDRIILDASTTAWYMAKILPDIELTVITNSMKAAIELSNKENISVISTGGILLEKSLSFAGPLAERSLETYHVNKTFLSCKGFDVHNGMSDSNEWQALLKKRMIERSDQTILMADSSKWGNREFSHIASLQDVSRLITDSGLDPASVKALEDKKVKVTAVPLSKRG.

Residues 3–58 (VAERQQKIVEIVNMRSSIRVSELSDIFSVTEETIRRDLEKLEKEHKLSRSHGGAVS) enclose the HTH deoR-type domain. The H-T-H motif DNA-binding region spans 20–39 (IRVSELSDIFSVTEETIRRD).

This is an uncharacterized protein from Bacillus subtilis (strain 168).